A 90-amino-acid polypeptide reads, in one-letter code: Small ribosomal subunit protein bS18 (90 aa).

This sequence belongs to the bacterial ribosomal protein bS18 family. As to quaternary structure, part of the 30S ribosomal subunit. Forms a tight heterodimer with protein bS6.

Its function is as follows. Binds as a heterodimer with protein bS6 to the central domain of the 16S rRNA, where it helps stabilize the platform of the 30S subunit. The polypeptide is Small ribosomal subunit protein bS18 (Bacteroides fragilis (strain YCH46)).